Consider the following 345-residue polypeptide: Probable deoxyhypusine synthase 2 (345 aa).

The Nucleophile role is filled by lysine 292.

It belongs to the deoxyhypusine synthase family. NAD(+) is required as a cofactor.

The catalysed reaction is [eIF5A protein]-L-lysine + spermidine = [eIF5A protein]-deoxyhypusine + propane-1,3-diamine. The protein operates within protein modification; eIF5A hypusination. Its function is as follows. Catalyzes the NAD-dependent oxidative cleavage of spermidine and the subsequent transfer of the butylamine moiety of spermidine to the epsilon-amino group of a specific lysine residue of the eIF-5A precursor protein to form the intermediate deoxyhypusine residue. The chain is Probable deoxyhypusine synthase 2 (dys2) from Methanosarcina acetivorans (strain ATCC 35395 / DSM 2834 / JCM 12185 / C2A).